A 98-amino-acid polypeptide reads, in one-letter code: Large ribosomal subunit protein uL23 (98 aa).

The protein belongs to the universal ribosomal protein uL23 family. Part of the 50S ribosomal subunit. Contacts protein L29, and trigger factor when it is bound to the ribosome.

Its function is as follows. One of the early assembly proteins it binds 23S rRNA. One of the proteins that surrounds the polypeptide exit tunnel on the outside of the ribosome. Forms the main docking site for trigger factor binding to the ribosome. In Cereibacter sphaeroides (strain ATCC 17029 / ATH 2.4.9) (Rhodobacter sphaeroides), this protein is Large ribosomal subunit protein uL23.